A 258-amino-acid polypeptide reads, in one-letter code: Pimeloyl-[acyl-carrier protein] methyl ester esterase (258 aa).

Residues 17–241 enclose the AB hydrolase-1 domain; sequence VYLIHGWGAN…KAAHAPFLSH (225 aa). Residues tryptophan 23, 83–84, and 145–149 contribute to the substrate site; these read SL and FLQLQ. Serine 83 (nucleophile) is an active-site residue. Catalysis depends on residues aspartate 207 and histidine 235. Histidine 235 contacts substrate.

Belongs to the AB hydrolase superfamily. Carboxylesterase BioH family. In terms of assembly, monomer.

Its subcellular location is the cytoplasm. The enzyme catalyses 6-carboxyhexanoyl-[ACP] methyl ester + H2O = 6-carboxyhexanoyl-[ACP] + methanol + H(+). It participates in cofactor biosynthesis; biotin biosynthesis. Its function is as follows. The physiological role of BioH is to remove the methyl group introduced by BioC when the pimeloyl moiety is complete. It allows to synthesize pimeloyl-ACP via the fatty acid synthetic pathway through the hydrolysis of the ester bonds of pimeloyl-ACP esters. The polypeptide is Pimeloyl-[acyl-carrier protein] methyl ester esterase (Neisseria meningitidis serogroup B (strain ATCC BAA-335 / MC58)).